A 226-amino-acid chain; its full sequence is Pyridoxal 5'-phosphate synthase subunit PdxT (226 aa).

Residue 60–62 (GES) participates in L-glutamine binding. Cysteine 92 acts as the Nucleophile in catalysis. Residues arginine 121 and 150-151 (IR) each bind L-glutamine. Catalysis depends on charge relay system residues histidine 191 and glutamate 193.

It belongs to the glutaminase PdxT/SNO family. In the presence of PdxS, forms a dodecamer of heterodimers. Only shows activity in the heterodimer.

It carries out the reaction aldehydo-D-ribose 5-phosphate + D-glyceraldehyde 3-phosphate + L-glutamine = pyridoxal 5'-phosphate + L-glutamate + phosphate + 3 H2O + H(+). The enzyme catalyses L-glutamine + H2O = L-glutamate + NH4(+). It participates in cofactor biosynthesis; pyridoxal 5'-phosphate biosynthesis. Its function is as follows. Catalyzes the hydrolysis of glutamine to glutamate and ammonia as part of the biosynthesis of pyridoxal 5'-phosphate. The resulting ammonia molecule is channeled to the active site of PdxS. This Nocardia farcinica (strain IFM 10152) protein is Pyridoxal 5'-phosphate synthase subunit PdxT.